A 266-amino-acid chain; its full sequence is CD82 antigen (266 aa).

Over 1 to 11 the chain is Cytoplasmic; that stretch reads MGAGCVKVTKY. Cys5 carries the S-palmitoyl cysteine lipid modification. Residues 12-32 traverse the membrane as a helical segment; the sequence is FLFLFNLLFFILGAVILGFGV. The Extracellular segment spans residues 33–53; it reads WILADKNSFISVLQTSSSSLQ. The chain crosses the membrane as a helical span at residues 54–72; it reads VGAYVFIGVGAITIVMGFL. Over 73–83 the chain is Cytoplasmic; that stretch reads GCIGAVNEVRC. Residue Cys74 is the site of S-palmitoyl cysteine attachment. A helical membrane pass occupies residues 84-110; that stretch reads LLGLYFVFLLLILIAQVTVGVLFYFNA. At 111–227 the chain is on the extracellular side; that stretch reads DKLKKEMGNT…KAQAWLQENF (117 aa). Asn127, Asn131, Asn157, and Asn197 each carry an N-linked (GlcNAc...) asparagine glycan. Residues 228–249 form a helical membrane-spanning segment; that stretch reads GILLGVCAGVAVIELLGLFLSI. The Cytoplasmic segment spans residues 250 to 266; the sequence is CLCRYIHSEDYSKVPKY.

The protein belongs to the tetraspanin (TM4SF) family. In terms of assembly, forms homooligomers. Interacts directly with IGSF8. Interacts with EGFR. Interacts with VEGFA and PDGFA. Interacts with ITGA4. Interacts with ITGA6; this interaction reduces ITGA6 cell surface expression. Interacts with ITGB1. Interacts with TLR4; this interaction inhibits TLR4-mediated signaling pathway. Interacts with TLR9. Interacts with PLAUR. In terms of processing, palmitoylated. Palmitoylation contributes to oligomerization and surface expression. Highest expression in the spleen and the kidney. Low expression in skeletal muscle and in the heart.

It localises to the cell membrane. The protein resides in the cytoplasmic vesicle. The protein localises to the phagosome. Its function is as follows. Structural component of specialized membrane microdomains known as tetraspanin-enriched microdomains (TERMs), which act as platforms for receptor clustering and signaling. Participates thereby in diverse biological functions such as cell signal transduction, adhesion, migration and protein trafficking. Acts as a attenuator of EGF signaling, facilitating ligand-induced endocytosis of the receptor and its subsequent desensitization. Mechanistically, modulates ligand-induced ubiquitination and trafficking of EGFR via E3 ligase CBL phosphorylation by PKC. Increases cell-matrix adhesion by regulating the membrane organization of integrin alpha4/ITA4. Modulates adhesion and suppresses cell migration through other integrins such as the alpha6/ITGA6 and beta1/ITGB1. Decreases cell-associated plasminogen activation by interfering with the interaction between urokinase-type plasminogen activator/PLAU and its receptor PLAUR. Associates with CD4 or CD8 and delivers costimulatory signals for the TCR/CD3 pathway. Plays a role in the restrains phagocyte migration but supports macrophage activation. Plays a role in TLR9 trafficking to acidified CpG-containing compartments by controlling interaction between TLR9 and VAMP3 and subsequent myddosome assembly. Inhibits LPS-induced inflammatory response by preventing binding of LPS to TLR4 on the cell surface. Plays a role in the activation of macrophages into anti-inflammatory phenotypes. Independently of Toll-like receptor (TLR) signaling, is recruited to pathogen-containing phagosomes prior to fusion with lysosomes and participates in antigen presentation. Also acts to control angiogenesis and switch angiogenic milieu to quiescent state by binding and sequestering VEGFA and PDGFA to inhibit the signaling they trigger via their respective cell surface receptor. The sequence is that of CD82 antigen (Cd82) from Mus musculus (Mouse).